The following is a 594-amino-acid chain: Proteasome-associated ATPase (594 aa).

A coiled-coil region spans residues 20–98 (DDLAAQVTYL…KEEIDRLAQP (79 aa)). Residue 282 to 287 (GCGKTL) coordinates ATP. A docks into pockets in the proteasome alpha-ring region spans residues 593-594 (YL).

Belongs to the AAA ATPase family. As to quaternary structure, homohexamer. Assembles into a hexameric ring structure that caps the 20S proteasome core. Strongly interacts with the prokaryotic ubiquitin-like protein Pup through a hydrophobic interface; the interacting region of ARC lies in its N-terminal coiled-coil domain. There is one Pup binding site per ARC hexamer ring. Upon ATP-binding, the C-terminus of ARC interacts with the alpha-rings of the proteasome core, possibly by binding to the intersubunit pockets.

It participates in protein degradation; proteasomal Pup-dependent pathway. ATPase which is responsible for recognizing, binding, unfolding and translocation of pupylated proteins into the bacterial 20S proteasome core particle. May be essential for opening the gate of the 20S proteasome via an interaction with its C-terminus, thereby allowing substrate entry and access to the site of proteolysis. Thus, the C-termini of the proteasomal ATPase may function like a 'key in a lock' to induce gate opening and therefore regulate proteolysis. This Catenulispora acidiphila (strain DSM 44928 / JCM 14897 / NBRC 102108 / NRRL B-24433 / ID139908) protein is Proteasome-associated ATPase.